A 114-amino-acid chain; its full sequence is 11.9 kDa wall protein (114 aa).

A propeptide spanning residues 1-6 is cleaved from the precursor; the sequence is MSFKTR.

It localises to the secreted. Its subcellular location is the cell wall. In terms of biological role, may play a role in the structure of the hypha-forming fruit bodies. In Tuber dryophilum (Truffle), this protein is 11.9 kDa wall protein (TDF-1).